A 910-amino-acid chain; its full sequence is Protein translocase subunit SecA (910 aa).

Residues Gln-87, 105–109 (GEGKT), and Asp-508 contribute to the ATP site. Positions 848–910 (RLSQSQFQHQ…KYKHCHGQLS (63 aa)) are disordered. The span at 869–880 (AQVQAAQQGVAQ) shows a compositional bias: low complexity. The Zn(2+) site is built by Cys-894, Cys-896, Cys-905, and His-906. The segment covering 900–910 (KKYKHCHGQLS) has biased composition (basic residues).

It belongs to the SecA family. In terms of assembly, monomer and homodimer. Part of the essential Sec protein translocation apparatus which comprises SecA, SecYEG and auxiliary proteins SecDF-YajC and YidC. Zn(2+) is required as a cofactor.

It is found in the cell inner membrane. The protein resides in the cytoplasm. It carries out the reaction ATP + H2O + cellular proteinSide 1 = ADP + phosphate + cellular proteinSide 2.. Part of the Sec protein translocase complex. Interacts with the SecYEG preprotein conducting channel. Has a central role in coupling the hydrolysis of ATP to the transfer of proteins into and across the cell membrane, serving both as a receptor for the preprotein-SecB complex and as an ATP-driven molecular motor driving the stepwise translocation of polypeptide chains across the membrane. The polypeptide is Protein translocase subunit SecA (Stenotrophomonas maltophilia (strain K279a)).